The primary structure comprises 138 residues: Large ribosomal subunit protein uL16 (138 aa).

Residues 1 to 13 (MLQPSRRKYRKEQ) are compositionally biased toward basic residues. A disordered region spans residues 1-22 (MLQPSRRKYRKEQKGRNTGLAT).

It belongs to the universal ribosomal protein uL16 family. In terms of assembly, part of the 50S ribosomal subunit.

Binds 23S rRNA and is also seen to make contacts with the A and possibly P site tRNAs. The polypeptide is Large ribosomal subunit protein uL16 (Bordetella petrii (strain ATCC BAA-461 / DSM 12804 / CCUG 43448)).